A 143-amino-acid polypeptide reads, in one-letter code: MQSTPIILVAIVLLGAALVRAFDEKEALAKLMESAESCMPEVGATDADLQEMVKKQPASTYAGKCLRACVMKNIGILDANGKLDTEAGHEKAKQYTGNDPAKLKIALEIGDTCAAITVPDDHCEAAEAYGTCFRGEAKKHGLL.

The signal sequence occupies residues 1-21; the sequence is MQSTPIILVAIVLLGAALVRA. Cystine bridges form between cysteine 38-cysteine 69, cysteine 65-cysteine 123, and cysteine 113-cysteine 132.

Expressed in antenna, mostly on the medial and posterior surface of the third antennal segment.

Its subcellular location is the secreted. The polypeptide is General odorant-binding protein 28a (Obp28a) (Drosophila melanogaster (Fruit fly)).